The primary structure comprises 519 residues: 3-octaprenyl-4-hydroxybenzoate carboxy-lyase (519 aa).

N177 is a binding site for Mn(2+). Prenylated FMN-binding positions include 180-182, 194-196, and 199-200; these read IYR, RWL, and RG. E243 serves as a coordination point for Mn(2+). The Proton donor role is filled by D318.

It belongs to the UbiD family. Homohexamer. Requires prenylated FMN as cofactor. Mn(2+) is required as a cofactor.

Its subcellular location is the cell membrane. It carries out the reaction a 4-hydroxy-3-(all-trans-polyprenyl)benzoate + H(+) = a 2-(all-trans-polyprenyl)phenol + CO2. The protein operates within cofactor biosynthesis; ubiquinone biosynthesis. In terms of biological role, catalyzes the decarboxylation of 3-octaprenyl-4-hydroxy benzoate to 2-octaprenylphenol, an intermediate step in ubiquinone biosynthesis. This is 3-octaprenyl-4-hydroxybenzoate carboxy-lyase from Burkholderia pseudomallei (strain 1710b).